A 362-amino-acid polypeptide reads, in one-letter code: 3-dehydroquinate synthase (362 aa).

NAD(+) is bound by residues 71–76 (DGEQYK), 105–109 (GVIGD), 129–130 (TT), Lys142, Lys151, and 169–172 (CLKT). Glu184, His247, and His264 together coordinate Zn(2+).

The protein belongs to the sugar phosphate cyclases superfamily. Dehydroquinate synthase family. Requires Co(2+) as cofactor. Zn(2+) is required as a cofactor. It depends on NAD(+) as a cofactor.

It localises to the cytoplasm. The enzyme catalyses 7-phospho-2-dehydro-3-deoxy-D-arabino-heptonate = 3-dehydroquinate + phosphate. The protein operates within metabolic intermediate biosynthesis; chorismate biosynthesis; chorismate from D-erythrose 4-phosphate and phosphoenolpyruvate: step 2/7. Catalyzes the conversion of 3-deoxy-D-arabino-heptulosonate 7-phosphate (DAHP) to dehydroquinate (DHQ). This is 3-dehydroquinate synthase from Salmonella schwarzengrund (strain CVM19633).